We begin with the raw amino-acid sequence, 157 residues long: Protein Smg (157 aa).

It belongs to the Smg family.

This Salmonella agona (strain SL483) protein is Protein Smg.